The following is a 152-amino-acid chain: Protein Smg homolog (152 aa).

Belongs to the Smg family.

This is Protein Smg homolog from Chromobacterium violaceum (strain ATCC 12472 / DSM 30191 / JCM 1249 / CCUG 213 / NBRC 12614 / NCIMB 9131 / NCTC 9757 / MK).